Here is a 534-residue protein sequence, read N- to C-terminus: CTP synthase (534 aa).

Residues 1-266 (MKTKFIFVTG…DEQVVEKLNI (266 aa)) form an amidoligase domain region. S14 provides a ligand contact to CTP. S14 is a UTP binding site. Residues 15–20 (SIGKGL) and D72 contribute to the ATP site. D72 and E140 together coordinate Mg(2+). Residues 147–149 (DIE), 187–192 (KTKPTQ), and K223 contribute to the CTP site. Residues 187–192 (KTKPTQ) and K223 each bind UTP. The Glutamine amidotransferase type-1 domain occupies 292 to 534 (RIAIVGKYVN…IAAALHNIKA (243 aa)). L-glutamine is bound at residue G354. C381 (nucleophile; for glutamine hydrolysis) is an active-site residue. Residues 382–385 (LGMQ), E405, and R462 each bind L-glutamine. Active-site residues include H507 and E509.

This sequence belongs to the CTP synthase family. As to quaternary structure, homotetramer.

The catalysed reaction is UTP + L-glutamine + ATP + H2O = CTP + L-glutamate + ADP + phosphate + 2 H(+). The enzyme catalyses L-glutamine + H2O = L-glutamate + NH4(+). It carries out the reaction UTP + NH4(+) + ATP = CTP + ADP + phosphate + 2 H(+). The protein operates within pyrimidine metabolism; CTP biosynthesis via de novo pathway; CTP from UDP: step 2/2. Allosterically activated by GTP, when glutamine is the substrate; GTP has no effect on the reaction when ammonia is the substrate. The allosteric effector GTP functions by stabilizing the protein conformation that binds the tetrahedral intermediate(s) formed during glutamine hydrolysis. Inhibited by the product CTP, via allosteric rather than competitive inhibition. Its function is as follows. Catalyzes the ATP-dependent amination of UTP to CTP with either L-glutamine or ammonia as the source of nitrogen. Regulates intracellular CTP levels through interactions with the four ribonucleotide triphosphates. The chain is CTP synthase from Geotalea uraniireducens (strain Rf4) (Geobacter uraniireducens).